Here is a 249-residue protein sequence, read N- to C-terminus: Type III pantothenate kinase (249 aa).

6-13 (DCGNSFIK) is a binding site for ATP. Residues Y93 and 100-103 (GLDR) contribute to the substrate site. The active-site Proton acceptor is D102. K(+) is bound at residue D122. T125 is an ATP binding site. T181 lines the substrate pocket.

The protein belongs to the type III pantothenate kinase family. In terms of assembly, homodimer. It depends on NH4(+) as a cofactor. K(+) serves as cofactor.

The protein localises to the cytoplasm. The catalysed reaction is (R)-pantothenate + ATP = (R)-4'-phosphopantothenate + ADP + H(+). The protein operates within cofactor biosynthesis; coenzyme A biosynthesis; CoA from (R)-pantothenate: step 1/5. Functionally, catalyzes the phosphorylation of pantothenate (Pan), the first step in CoA biosynthesis. The sequence is that of Type III pantothenate kinase from Pseudomonas fluorescens (strain SBW25).